A 605-amino-acid chain; its full sequence is Proline--tRNA ligase (605 aa).

Belongs to the class-II aminoacyl-tRNA synthetase family. ProS type 1 subfamily. As to quaternary structure, homodimer.

The protein resides in the cytoplasm. It carries out the reaction tRNA(Pro) + L-proline + ATP = L-prolyl-tRNA(Pro) + AMP + diphosphate. In terms of biological role, catalyzes the attachment of proline to tRNA(Pro) in a two-step reaction: proline is first activated by ATP to form Pro-AMP and then transferred to the acceptor end of tRNA(Pro). As ProRS can inadvertently accommodate and process non-cognate amino acids such as alanine and cysteine, to avoid such errors it has two additional distinct editing activities against alanine. One activity is designated as 'pretransfer' editing and involves the tRNA(Pro)-independent hydrolysis of activated Ala-AMP. The other activity is designated 'posttransfer' editing and involves deacylation of mischarged Ala-tRNA(Pro). The misacylated Cys-tRNA(Pro) is not edited by ProRS. This chain is Proline--tRNA ligase, found in Bifidobacterium adolescentis (strain ATCC 15703 / DSM 20083 / NCTC 11814 / E194a).